A 294-amino-acid chain; its full sequence is Cytidine deaminase (294 aa).

CMP/dCMP-type deaminase domains lie at 48-168 (DEDA…FGPK) and 186-294 (LTGD…VLLG). 89–91 (NME) is a binding site for substrate. His102 provides a ligand contact to Zn(2+). Residue Glu104 is the Proton donor of the active site. Zn(2+) contacts are provided by Cys129 and Cys132.

This sequence belongs to the cytidine and deoxycytidylate deaminase family. Homodimer. Requires Zn(2+) as cofactor.

It catalyses the reaction cytidine + H2O + H(+) = uridine + NH4(+). The enzyme catalyses 2'-deoxycytidine + H2O + H(+) = 2'-deoxyuridine + NH4(+). Functionally, this enzyme scavenges exogenous and endogenous cytidine and 2'-deoxycytidine for UMP synthesis. The chain is Cytidine deaminase from Salmonella arizonae (strain ATCC BAA-731 / CDC346-86 / RSK2980).